An 83-amino-acid polypeptide reads, in one-letter code: Beta-defensin 119 (83 aa).

Residues 1-20 form the signal peptide; that stretch reads MKFLFLFLAILLAMEPVVSG. 3 cysteine pairs are disulfide-bonded: Cys-27/Cys-54, Cys-34/Cys-48, and Cys-38/Cys-55.

It belongs to the beta-defensin family.

The protein resides in the secreted. Functionally, has antibacterial activity. The sequence is that of Beta-defensin 119 (DEFB119) from Bos taurus (Bovine).